We begin with the raw amino-acid sequence, 300 residues long: Cell adhesion molecule CEACAM19 (300 aa).

A signal peptide spans 1–32 (MEIPMGTQGCFSKSLLLSASILVLWMLQGSQA). Residues 33–157 (ALYIQKIPEQ…PSTHLPTNAG (125 aa)) are Extracellular-facing. Residue Asn-104 is glycosylated (N-linked (GlcNAc...) asparagine). A helical membrane pass occupies residues 158-178 (ILAATIIGSLAAGALLISCIA). Topologically, residues 179 to 300 (YLLVTRNWRG…APYCQLVPTS (122 aa)) are cytoplasmic. The segment at 259–291 (SINPARPLPTPPHLQAEPENHQYQQDLLNPDPA) is disordered.

The protein belongs to the immunoglobulin superfamily. CEA family. Ubiquitous with highest expression in prostate, uterus, fetal brain, mammary gland, adrenal gland, skeletal muscle, small intestine, and kidney, and lower expression in lung, cerebellum, testis, liver, pancreas, bone marrow and ovary.

The protein resides in the membrane. The sequence is that of Cell adhesion molecule CEACAM19 from Homo sapiens (Human).